Here is a 748-residue protein sequence, read N- to C-terminus: Adenosylcobalamin-dependent ribonucleoside-triphosphate reductase (748 aa).

Cys-123 and Cys-426 are oxidised to a cystine. The tract at residues 151 to 162 (SMPYSFMFDELM) is effector region-1. Positions 172 to 320 (TKDNIAKLPP…IGNLIGKTVV (149 aa)) are effector region-2. Active-site residues include Cys-415 and Glu-417. The tract at residues 572–633 (FHYAGYLIQR…DPAFASAGTV (62 aa)) is adenosylcobalamin-binding-1. The segment at 692 to 733 (FKQAPKEPIDVKTYKQKCAAIHGSVAAVFAVQNADHDQKDLE) is adenosylcobalamin-binding-2.

It belongs to the class II ribonucleoside-triphosphate reductase family. As to quaternary structure, monomer. Adenosylcob(III)alamin serves as cofactor.

It catalyses the reaction a 2'-deoxyribonucleoside 5'-triphosphate + [thioredoxin]-disulfide + H2O = a ribonucleoside 5'-triphosphate + [thioredoxin]-dithiol. Its activity is regulated as follows. Allosterically regulated by ATP and dNTP. The polypeptide is Adenosylcobalamin-dependent ribonucleoside-triphosphate reductase (rtpR) (Lacticaseibacillus paracasei (strain ATCC 334 / BCRC 17002 / CCUG 31169 / CIP 107868 / KCTC 3260 / NRRL B-441) (Lactobacillus paracasei)).